The following is a 514-amino-acid chain: Protein nucleotidyltransferase YdiU (514 aa).

Gly90, Gly92, Arg93, Lys113, Asp125, Gly126, Arg176, and Arg183 together coordinate ATP. The Proton acceptor role is filled by Asp267. 2 residues coordinate Mg(2+): Asn268 and Asp277. Asp277 contacts ATP.

Belongs to the SELO family. It depends on Mg(2+) as a cofactor. Requires Mn(2+) as cofactor.

The catalysed reaction is L-seryl-[protein] + ATP = 3-O-(5'-adenylyl)-L-seryl-[protein] + diphosphate. It carries out the reaction L-threonyl-[protein] + ATP = 3-O-(5'-adenylyl)-L-threonyl-[protein] + diphosphate. The enzyme catalyses L-tyrosyl-[protein] + ATP = O-(5'-adenylyl)-L-tyrosyl-[protein] + diphosphate. It catalyses the reaction L-histidyl-[protein] + UTP = N(tele)-(5'-uridylyl)-L-histidyl-[protein] + diphosphate. The catalysed reaction is L-seryl-[protein] + UTP = O-(5'-uridylyl)-L-seryl-[protein] + diphosphate. It carries out the reaction L-tyrosyl-[protein] + UTP = O-(5'-uridylyl)-L-tyrosyl-[protein] + diphosphate. Functionally, nucleotidyltransferase involved in the post-translational modification of proteins. It can catalyze the addition of adenosine monophosphate (AMP) or uridine monophosphate (UMP) to a protein, resulting in modifications known as AMPylation and UMPylation. This is Protein nucleotidyltransferase YdiU from Photobacterium profundum (strain SS9).